We begin with the raw amino-acid sequence, 32 residues long: Toxic phospholipase A2 (32 aa).

This sequence belongs to the phospholipase A2 family. Group III subfamily. Requires Ca(2+) as cofactor.

It is found in the secreted. The protein localises to the nematocyst. It catalyses the reaction a 1,2-diacyl-sn-glycero-3-phosphocholine + H2O = a 1-acyl-sn-glycero-3-phosphocholine + a fatty acid + H(+). In terms of biological role, PLA2 catalyzes the calcium-dependent hydrolysis of the 2-acyl groups in 3-sn-phosphoglycerides. The chain is Toxic phospholipase A2 from Rhopilema nomadica (Mediteranean medusa).